A 294-amino-acid polypeptide reads, in one-letter code: Acetyl-coenzyme A carboxylase carboxyl transferase subunit beta (294 aa).

The CoA carboxyltransferase N-terminal domain maps to Ile30–Glu294. Positions 34, 37, 53, and 56 each coordinate Zn(2+). The C4-type zinc finger occupies Cys34–Cys56.

This sequence belongs to the AccD/PCCB family. In terms of assembly, acetyl-CoA carboxylase is a heterohexamer composed of biotin carboxyl carrier protein (AccB), biotin carboxylase (AccC) and two subunits each of ACCase subunit alpha (AccA) and ACCase subunit beta (AccD). The cofactor is Zn(2+).

Its subcellular location is the cytoplasm. It catalyses the reaction N(6)-carboxybiotinyl-L-lysyl-[protein] + acetyl-CoA = N(6)-biotinyl-L-lysyl-[protein] + malonyl-CoA. Its pathway is lipid metabolism; malonyl-CoA biosynthesis; malonyl-CoA from acetyl-CoA: step 1/1. Its function is as follows. Component of the acetyl coenzyme A carboxylase (ACC) complex. Biotin carboxylase (BC) catalyzes the carboxylation of biotin on its carrier protein (BCCP) and then the CO(2) group is transferred by the transcarboxylase to acetyl-CoA to form malonyl-CoA. The polypeptide is Acetyl-coenzyme A carboxylase carboxyl transferase subunit beta (Listeria innocua serovar 6a (strain ATCC BAA-680 / CLIP 11262)).